A 247-amino-acid polypeptide reads, in one-letter code: Carboxy-S-adenosyl-L-methionine synthase (247 aa).

S-adenosyl-L-methionine is bound by residues Y40, 65–67, 90–91, 122–123, N137, and R204; these read GAS, DN, and DI.

The protein belongs to the class I-like SAM-binding methyltransferase superfamily. Cx-SAM synthase family. As to quaternary structure, homodimer.

It carries out the reaction prephenate + S-adenosyl-L-methionine = carboxy-S-adenosyl-L-methionine + 3-phenylpyruvate + H2O. In terms of biological role, catalyzes the conversion of S-adenosyl-L-methionine (SAM) to carboxy-S-adenosyl-L-methionine (Cx-SAM). The sequence is that of Carboxy-S-adenosyl-L-methionine synthase from Pseudomonas fluorescens (strain Pf0-1).